A 645-amino-acid polypeptide reads, in one-letter code: Cysteine-rich receptor-like protein kinase 10 (645 aa).

Positions 1–27 are cleaved as a signal peptide; the sequence is MSMACYYLAAAAAGLALLLLHAPLTDA. 2 Gnk2-homologous domains span residues 28–132 and 140–251; these read QTLV…NDAF and SQGM…VYPF. The Extracellular segment spans residues 28-283; the sequence is QTLVPLCGDS…AGERSKNKRS (256 aa). N-linked (GlcNAc...) asparagine glycosylation is found at Asn-39 and Asn-91. 2 disulfides stabilise this stretch: Cys-86-Cys-95 and Cys-98-Cys-123. N-linked (GlcNAc...) asparagine glycans are attached at residues Asn-151 and Asn-169. 2 cysteine pairs are disulfide-bonded: Cys-204/Cys-213 and Cys-216/Cys-242. A helical transmembrane segment spans residues 284–304; that stretch reads AILAISMPTIALVLATIAAWF. Topologically, residues 305–645 are cytoplasmic; sequence CSTSWRRRRL…WVQEIGATAS (341 aa). Residues 348–619 enclose the Protein kinase domain; that stretch reads FSEHKRLGEG…PLMSAVNAML (272 aa). ATP contacts are provided by residues 354-362 and Lys-376; that span reads LGEGGFGVV. Asp-473 functions as the Proton acceptor in the catalytic mechanism.

The protein belongs to the protein kinase superfamily. Ser/Thr protein kinase family. CRK subfamily.

It localises to the membrane. Its function is as follows. Involved in disease resistance. Required for NPR1/NH1-mediated immunity to the bacterial blight pathogen Xanthomomas oryzae pv. oryzae (Xoo). Required for the benzothiadiazole (BTH)-induced immune response. Probably regulated by the transcription factor TGA2.1. This chain is Cysteine-rich receptor-like protein kinase 10, found in Oryza sativa subsp. japonica (Rice).